A 550-amino-acid polypeptide reads, in one-letter code: Glucose-6-phosphate isomerase (550 aa).

E356 acts as the Proton donor in catalysis. Residues H387 and K515 contribute to the active site.

Belongs to the GPI family.

Its subcellular location is the cytoplasm. It carries out the reaction alpha-D-glucose 6-phosphate = beta-D-fructose 6-phosphate. It functions in the pathway carbohydrate biosynthesis; gluconeogenesis. Its pathway is carbohydrate degradation; glycolysis; D-glyceraldehyde 3-phosphate and glycerone phosphate from D-glucose: step 2/4. In terms of biological role, catalyzes the reversible isomerization of glucose-6-phosphate to fructose-6-phosphate. This Vibrio campbellii (strain ATCC BAA-1116) protein is Glucose-6-phosphate isomerase.